We begin with the raw amino-acid sequence, 394 residues long: Elongation factor Tu 1 (394 aa).

Positions 10 to 204 (KPHVNVGTIG…FLDSYIPEPE (195 aa)) constitute a tr-type G domain. Positions 19–26 (GHVDHGKT) are G1. Position 19–26 (19–26 (GHVDHGKT)) interacts with GTP. T26 serves as a coordination point for Mg(2+). The interval 60-64 (GITIN) is G2. Residues 81–84 (DCPG) are G3. GTP is bound by residues 81–85 (DCPGH) and 136–139 (NKCD). The interval 136–139 (NKCD) is G4. Residues 174-176 (SAL) form a G5 region.

It belongs to the TRAFAC class translation factor GTPase superfamily. Classic translation factor GTPase family. EF-Tu/EF-1A subfamily. As to quaternary structure, monomer.

It is found in the cytoplasm. The catalysed reaction is GTP + H2O = GDP + phosphate + H(+). Functionally, GTP hydrolase that promotes the GTP-dependent binding of aminoacyl-tRNA to the A-site of ribosomes during protein biosynthesis. This chain is Elongation factor Tu 1, found in Shigella flexneri serotype 5b (strain 8401).